Consider the following 327-residue polypeptide: Transcription factor bHLH71 (327 aa).

Disordered regions lie at residues 46–88 (ISEI…NQRM) and 151–176 (AKLN…HQPS). Residues 65 to 76 (RGKKRRRRKPRV) are compositionally biased toward basic residues. Positions 77-88 (CKNEEEAENQRM) are enriched in basic and acidic residues. The 52-residue stretch at 85–136 (NQRMTHIAVERNRRRQMNQHLSVLRSLMPQPFAHKGDQASIVGGAIDFIKEL) folds into the bHLH domain. Positions 152-169 (KLNQSVTSSTSQDSNGEQ) are enriched in polar residues.

In terms of assembly, homodimer. Interacts with FAMA. Expressed in leaves, stems, and flowers.

The protein resides in the nucleus. Functionally, transcription factor. May be involved in the differentiation of stomatal guard cells. The sequence is that of Transcription factor bHLH71 (BHLH71) from Arabidopsis thaliana (Mouse-ear cress).